We begin with the raw amino-acid sequence, 802 residues long: MAAITPSWALETTADGEVKEKTSGPGGQWRALNVGPDLIRSLLIRKFKTPTPIQRAAIPPALSTPPRDILGMARTGSGKTLAYLIPLLQRTGSTHHGQGPRALILCPSRELAVQIYTVGKDLARGMNKGKGKGKNKNEDEEDEEGKGKEGLRWALIIGGEGMDAQFEKMSSNPDIVIATPGRFLHLIVEMHMDLRHLQTVIYDEADRLFEMGFDVQLQEILHRLPSTRQNLLFSATLPSSVAEFAKAGLVNPLLVRLDAEQKISPDLALKFFSVKPGEKEASLLVLLREVIGKPNQPEPADPSSAPQAIVFVATKHHVDYVAELLRTTGYRTSLIYSSLDQVARQQQLAGFRSHQSDVLVVTDVAARGLDIPIMDHVINYDFPAGPRIFVHRVGRTARAGRKGTAYSLIVKEDFPYLCDLHTFLGTERMGEPADVLRSLPIEQLSENVEYVFHNLDETAPHITALRNVMRKGQGMFERSRTKANPTSYRQAKSLASALSNNPPRIDDMFEDAMEVEVNEEKARLLAKVAAFTPSETVFEVGKRESESAIIMKKRRKTVDERQKRVSKAEAEKSTASGMEKAPVKELPAPQLPSKNFKDPSFYLDHTQRGAEAEKGYSLKSGVESLSGAITDMTADEGTGPKAQKASQLSWDRKKHKFIKKNGSADGEKMIKSESGALLPASYSSGKYQEWKSKRRHMPDGPVEALALGGGRRGRHGPPGQKRKAEDGDGGEDAGGKGRKDQGKSKGTGKGKDDFKQKSPGKPGKKGIKQSSGLKSAMDIRKQREIAQKRKEKNARKPQKFRK.

The short motif at 27–55 (GQWRALNVGPDLIRSLLIRKFKTPTPIQR) is the Q motif element. The region spanning 60–255 (PALSTPPRDI…KAGLVNPLLV (196 aa)) is the Helicase ATP-binding domain. Residue 73-80 (ARTGSGKT) participates in ATP binding. A disordered region spans residues 126–147 (MNKGKGKGKNKNEDEEDEEGKG). Positions 203 to 206 (DEAD) match the DEAD box motif. The Helicase C-terminal domain maps to 286 to 447 (LLREVIGKPN…SLPIEQLSEN (162 aa)). Disordered regions lie at residues 555-596 (RKTV…SKNF) and 632-802 (MTAD…KFRK). Basic and acidic residues-rich tracts occupy residues 557-572 (TVDE…EAEK), 733-756 (AGGK…DFKQ), and 777-788 (MDIRKQREIAQK). Residues 789 to 802 (RKEKNARKPQKFRK) are compositionally biased toward basic residues.

This sequence belongs to the DEAD box helicase family. DDX54/DBP10 subfamily.

It localises to the nucleus. Its subcellular location is the nucleolus. It catalyses the reaction ATP + H2O = ADP + phosphate + H(+). ATP-binding RNA helicase involved in the biogenesis of 60S ribosomal subunits and is required for the normal formation of 25S and 5.8S rRNAs. This chain is ATP-dependent RNA helicase DBP10 (DBP10), found in Cryptococcus neoformans var. neoformans serotype D (strain B-3501A) (Filobasidiella neoformans).